Consider the following 416-residue polypeptide: CinA-like protein (416 aa).

The protein belongs to the CinA family.

The protein is CinA-like protein of Solibacter usitatus (strain Ellin6076).